Here is a 499-residue protein sequence, read N- to C-terminus: Lysine--tRNA ligase (499 aa).

Positions 408 and 415 each coordinate Mg(2+).

The protein belongs to the class-II aminoacyl-tRNA synthetase family. Homodimer. Mg(2+) is required as a cofactor.

It localises to the cytoplasm. The catalysed reaction is tRNA(Lys) + L-lysine + ATP = L-lysyl-tRNA(Lys) + AMP + diphosphate. The protein is Lysine--tRNA ligase of Agrobacterium fabrum (strain C58 / ATCC 33970) (Agrobacterium tumefaciens (strain C58)).